The following is a 209-amino-acid chain: Orotate phosphoribosyltransferase (209 aa).

5-phospho-alpha-D-ribose 1-diphosphate is bound by residues arginine 96, lysine 100, histidine 102, and 122 to 130 (EDLISTGGS). Serine 126 serves as a coordination point for orotate.

Belongs to the purine/pyrimidine phosphoribosyltransferase family. PyrE subfamily. Homodimer. Requires Mg(2+) as cofactor.

The enzyme catalyses orotidine 5'-phosphate + diphosphate = orotate + 5-phospho-alpha-D-ribose 1-diphosphate. Its pathway is pyrimidine metabolism; UMP biosynthesis via de novo pathway; UMP from orotate: step 1/2. In terms of biological role, catalyzes the transfer of a ribosyl phosphate group from 5-phosphoribose 1-diphosphate to orotate, leading to the formation of orotidine monophosphate (OMP). This is Orotate phosphoribosyltransferase from Streptococcus pyogenes serotype M2 (strain MGAS10270).